We begin with the raw amino-acid sequence, 101 residues long: Protein S100-A7 (101 aa).

At serine 2 the chain carries N-acetylserine. 2 EF-hand domains span residues 13 to 48 and 50 to 85; these read MIDM…SACD and KGTN…IATD. Zn(2+)-binding residues include histidine 18 and aspartate 25. Residues cysteine 47 and cysteine 96 are joined by a disulfide bond. Aspartate 63, asparagine 65, aspartate 67, lysine 69, and glutamate 74 together coordinate Ca(2+). Zn(2+)-binding residues include histidine 87 and histidine 91.

As to quaternary structure, interacts with RANBP9. Fetal ear, skin, and tongue and human cell lines. Highly up-regulated in psoriatic epidermis. Also highly expressed in the urine of bladder squamous cell carcinoma (SCC) bearing patients.

The protein resides in the cytoplasm. It is found in the secreted. The polypeptide is Protein S100-A7 (S100A7) (Homo sapiens (Human)).